A 130-amino-acid chain; its full sequence is Large ribosomal subunit protein uL22 (130 aa).

Belongs to the universal ribosomal protein uL22 family. Part of the 50S ribosomal subunit.

This protein binds specifically to 23S rRNA; its binding is stimulated by other ribosomal proteins, e.g. L4, L17, and L20. It is important during the early stages of 50S assembly. It makes multiple contacts with different domains of the 23S rRNA in the assembled 50S subunit and ribosome. Its function is as follows. The globular domain of the protein is located near the polypeptide exit tunnel on the outside of the subunit, while an extended beta-hairpin is found that lines the wall of the exit tunnel in the center of the 70S ribosome. In Clavibacter sepedonicus (Clavibacter michiganensis subsp. sepedonicus), this protein is Large ribosomal subunit protein uL22.